The following is a 413-amino-acid chain: Acyltransferase mokF (413 aa).

Residue Arg93 coordinates monacolin J. Ser96 serves as the catalytic Acyl-ester intermediate. Monacolin J contacts are provided by Arg193, Tyr208, and Tyr278. 2-methylbutanoate is bound at residue Gly386.

The protein belongs to the class-A beta-lactamase family.

It catalyses the reaction monacolin J carboxylate + (S)-2-methylbutanoyl-[2-methylbutanoate polyketide synthase] = lovastatin carboxylate + holo-[2-methylbutanoate polyketide synthase]. It functions in the pathway polyketide biosynthesis; lovastatin biosynthesis. In terms of biological role, acyltransferase; part of the gene cluster that mediates the biosynthesis of monakolin K, also known as lovastatin, and which acts as a potent competitive inhibitor of HMG-CoA reductase. Monakolin K biosynthesis is performed in two stages. The first stage is catalyzed by the nonaketide synthase mokA, which belongs to type I polyketide synthases and catalyzes the iterative nine-step formation of the polyketide. This PKS stage is completed by the action of dehydrogenase mokE, which catalyzes the NADPH-dependent reduction of the unsaturated tetra-, penta- and heptaketide intermediates that arise during the mokA-mediated biosynthesis of the nonaketide chain and leads to dihydromonacolin L. Covalently bound dihydromonacolin L is released from mokA by the mokD esterase. Conversion of dihydromonacolin L into monacolin L and then monacolin J is subsequently performed with the participation of molecular oxygen and P450 monoogygenase mokC. Finally, mokF performs the conversion of monacoline J to monacoline K through the addition of the side-chain diketide moiety (2R)-2-methylbutanoate produced by the diketide synthase mokB. The polypeptide is Acyltransferase mokF (Monascus pilosus (Red mold)).